A 243-amino-acid polypeptide reads, in one-letter code: Venom nerve growth factor 1 (243 aa).

A signal peptide spans 1-18 (MSMLCYTLIIAFLIGIWA). Residues 19–125 (APKSEDNVPL…TLNRNIRAKR (107 aa)) constitute a propeptide that is removed on maturation. The segment covering 47–66 (GLKTSRNTDQRHPAPKKAED) has biased composition (basic and acidic residues). The interval 47-69 (GLKTSRNTDQRHPAPKKAEDQEL) is disordered. Cystine bridges form between Cys-139–Cys-204, Cys-182–Cys-232, and Cys-192–Cys-234. The N-linked (GlcNAc...) asparagine glycan is linked to Asn-148.

Belongs to the NGF-beta family. As to quaternary structure, homodimer; non-covalently linked. Expressed by the venom gland.

It is found in the secreted. In terms of biological role, nerve growth factor is important for the development and maintenance of the sympathetic and sensory nervous systems. It stimulates division and differentiation of sympathetic and embryonic sensory neurons as well as basal forebrain cholinergic neurons in the brain. Its relevance in the snake venom is not clear. However, it has been shown to inhibit metalloproteinase-dependent proteolysis of platelet glycoprotein Ib alpha, suggesting a metalloproteinase inhibition to prevent metalloprotease autodigestion and/or protection against prey proteases. Binds a lipid between the two protein chains in the homodimer. The lipid-bound form promotes histamine relase from mouse mast cells, contrary to the lipid-free form. This chain is Venom nerve growth factor 1, found in Pseudonaja textilis (Eastern brown snake).